The chain runs to 282 residues: Rhomboid protease GlpG (282 aa).

6 helical membrane passes run 96–116, 144–164, 176–196, 197–217, 225–242, and 247–269; these read AGPL…WMQF, GLLH…WYLG, LFVI…LFSG, SHFG…WLTG, IGVP…LIVG, and FGLS…MALW. S203 serves as the catalytic Nucleophile. H256 is a catalytic residue.

It belongs to the peptidase S54 family.

The protein localises to the cell inner membrane. It catalyses the reaction Cleaves type-1 transmembrane domains using a catalytic dyad composed of serine and histidine that are contributed by different transmembrane domains.. In terms of biological role, rhomboid-type serine protease that catalyzes intramembrane proteolysis. The sequence is that of Rhomboid protease GlpG from Photorhabdus laumondii subsp. laumondii (strain DSM 15139 / CIP 105565 / TT01) (Photorhabdus luminescens subsp. laumondii).